Here is a 306-residue protein sequence, read N- to C-terminus: Ornithine carbamoyltransferase (306 aa).

Carbamoyl phosphate-binding positions include 50–53 (STRT), Q77, R101, and 128–131 (HPCQ). Residues N160, D224, and 228–229 (SM) each bind L-ornithine. Carbamoyl phosphate-binding positions include 261 to 262 (CL) and R289.

The protein belongs to the aspartate/ornithine carbamoyltransferase superfamily. OTCase family.

The protein resides in the cytoplasm. The catalysed reaction is carbamoyl phosphate + L-ornithine = L-citrulline + phosphate + H(+). The protein operates within amino-acid biosynthesis; L-arginine biosynthesis; L-arginine from L-ornithine and carbamoyl phosphate: step 1/3. In terms of biological role, reversibly catalyzes the transfer of the carbamoyl group from carbamoyl phosphate (CP) to the N(epsilon) atom of ornithine (ORN) to produce L-citrulline. This chain is Ornithine carbamoyltransferase, found in Aquifex aeolicus (strain VF5).